A 653-amino-acid chain; its full sequence is Extracellular metalloproteinase (653 aa).

Residues 1–19 form the signal peptide; it reads MRSFLLASLASLSVISVYG. A propeptide spanning residues 20-244 is cleaved from the precursor; sequence HPHARSTLTR…VHAVVDYSAD (225 aa). N-linked (GlcNAc...) asparagine glycosylation is found at Asn327, Asn336, and Asn412. Position 429 (His429) interacts with Zn(2+). Residue Glu430 is part of the active site. Position 433 (His433) interacts with Zn(2+). N-linked (GlcNAc...) asparagine glycans are attached at residues Asn636 and Asn637.

It belongs to the peptidase M36 family. Requires Zn(2+) as cofactor.

The protein resides in the secreted. Its function is as follows. Secreted metalloproteinase that allows assimilation of proteinaceous substrates. The chain is Extracellular metalloproteinase (MEP) from Pyrenophora tritici-repentis (strain Pt-1C-BFP) (Wheat tan spot fungus).